We begin with the raw amino-acid sequence, 99 residues long: Goannatyrotoxin-Vere1 (99 aa).

The N-terminal stretch at 1–28 is a signal peptide; it reads MIASMKPWPLVMVAALCILFCLGTLVDA. Tyr64 is modified (tyrosine amide). The propeptide at 68-99 is C-terminal extension; it reads SSPETLMSELIFGENSNSDHSSRSRFDDSYMW.

Belongs to the NPY family. Expressed by the mandibular venom gland.

The protein localises to the secreted. Functionally, shows a potent unique triphasic action, rapid biphasic hypertension followed by prolonged hypotension. This Varanus eremius (Rusty desert monitor) protein is Goannatyrotoxin-Vere1.